The sequence spans 206 residues: Probable GTP-binding protein EngB (206 aa).

Positions 8 to 195 (RDAEVVLVGR…EECLRTRFHE (188 aa)) constitute an EngB-type G domain. GTP contacts are provided by residues 16-23 (GRSNVGKS), 41-45 (GVTRQ), 60-63 (DLPG), 140-143 (NKTD), and 175-177 (ICA). Mg(2+) is bound by residues serine 23 and threonine 43.

This sequence belongs to the TRAFAC class TrmE-Era-EngA-EngB-Septin-like GTPase superfamily. EngB GTPase family. Requires Mg(2+) as cofactor.

Necessary for normal cell division and for the maintenance of normal septation. This chain is Probable GTP-binding protein EngB, found in Halorubrum lacusprofundi (strain ATCC 49239 / DSM 5036 / JCM 8891 / ACAM 34).